Here is a 123-residue protein sequence, read N- to C-terminus: Large ribosomal subunit protein bL12 (123 aa).

The protein belongs to the bacterial ribosomal protein bL12 family. Homodimer. Part of the ribosomal stalk of the 50S ribosomal subunit. Forms a multimeric L10(L12)X complex, where L10 forms an elongated spine to which 2 to 4 L12 dimers bind in a sequential fashion. Binds GTP-bound translation factors.

In terms of biological role, forms part of the ribosomal stalk which helps the ribosome interact with GTP-bound translation factors. Is thus essential for accurate translation. The polypeptide is Large ribosomal subunit protein bL12 (Chlorobium luteolum (strain DSM 273 / BCRC 81028 / 2530) (Pelodictyon luteolum)).